Reading from the N-terminus, the 807-residue chain is Lysyl oxidase homolog 3B (807 aa).

The signal sequence occupies residues 1-24 (MELHQWCRHIIVFLLNVWIPSCFA). SRCR domains are found at residues 49–150 (FRLS…VICK), 175–288 (VRLR…VSCV), 309–409 (TRLK…VRCN), 419–470 (VRIL…LGYA), and 476–579 (VRLS…VICS). 9 cysteine pairs are disulfide-bonded: Cys75–Cys139, Cys88–Cys149, Cys119–Cys129, Cys207–Cys277, Cys220–Cys287, Cys254–Cys264, Cys334–Cys398, Cys347–Cys408, and Cys378–Cys388. Asn272 is a glycosylation site (N-linked (GlcNAc...) asparagine). The N-linked (GlcNAc...) asparagine glycan is linked to Asn392. 2 disulfide bridges follow: Cys514/Cys578 and Cys547/Cys557. The N-linked (GlcNAc...) asparagine glycan is linked to Asn536. Residue Asn679 is glycosylated (N-linked (GlcNAc...) asparagine). The lysine tyrosylquinone (Lys-Tyr) cross-link spans 688-724 (KASFCLEDTDCDEGVSKRYKCANFGEQGITVGCWDLY). Tyr724 is subject to 2',4',5'-topaquinone.

Belongs to the lysyl oxidase family. The cofactor is Cu cation. Lysine tyrosylquinone residue serves as cofactor. Post-translationally, the lysine tyrosylquinone cross-link (LTQ) is generated by condensation of the epsilon-amino group of a lysine with a topaquinone produced by oxidation of tyrosine.

It is found in the secreted. Its subcellular location is the extracellular space. It localises to the cytoplasm. The protein localises to the nucleus. It carries out the reaction L-lysyl-[protein] + O2 + H2O = (S)-2-amino-6-oxohexanoyl-[protein] + H2O2 + NH4(+). The enzyme catalyses N(6)-acetyl-L-lysyl-[protein] + O2 + H2O = acetamide + (S)-2-amino-6-oxohexanoyl-[protein] + H2O2. Functionally, protein-lysine 6-oxidase that mediates the oxidation of peptidyl lysine residues to allysine in target proteins. Catalyzes the post-translational oxidative deamination of peptidyl lysine residues in precursors of elastin and different types of collagens, a prerequisite in the formation of cross-links between collagens and elastin. Can mediate oxidation of lysine residues that are acetylated. Also able to catalyze deacetylation of lysine residues. Required for maturation of neural crest derived cartilage elements. This Danio rerio (Zebrafish) protein is Lysyl oxidase homolog 3B.